A 314-amino-acid chain; its full sequence is Solute carrier family 25 member 44 (314 aa).

Solcar repeat units lie at residues 18 to 100 (KKFY…TRKF), 107 to 210 (SNTV…YAEQ), and 220 to 302 (PHIV…LKKL). Transmembrane regions (helical) follow at residues 20–42 (FYVFGVAMTMMIRVSVYPFTLIR), 71–90 (TGLYRGFLVNTFTLISGQCY), 113–133 (LVAGGSASLVAQSITVPIDVV), 185–201 (GYVASLLTYIPNSAVWW), 222–239 (IVFQAVSGPLAAATASIL), and 278–296 (LSARIISATPSTIVIVVGY).

This sequence belongs to the mitochondrial carrier (TC 2.A.29) family.

The protein localises to the mitochondrion membrane. The enzyme catalyses L-valine(in) = L-valine(out). The catalysed reaction is L-leucine(in) = L-leucine(out). Its function is as follows. Mitochondrial solute transporter which transports branched-chain amino acid (BCAA; valine, leucine and isoleucine) into mitochondria in brown adipose tissue (BAT). BAT is involved in BCAA catabolism and actively utilizes BCAA in the mitochondria for thermogenesis. This Homo sapiens (Human) protein is Solute carrier family 25 member 44.